The sequence spans 449 residues: Hyaluronidase (449 aa).

The N-terminal stretch at 1-23 (MYHIWIKFLAAWIFLKRFNGVHV) is a signal peptide. Cystine bridges form between Cys-47–Cys-340 and Cys-211–Cys-227. 3 N-linked (GlcNAc...) asparagine glycosylation sites follow: Asn-67, Asn-103, and Asn-111. Glu-135 functions as the Proton donor in the catalytic mechanism. N-linked (GlcNAc...) asparagine glycosylation occurs at Asn-153. A glycan (N-linked (GlcNAc...) asparagine) is linked at Asn-357. Intrachain disulfides connect Cys-365–Cys-376, Cys-370–Cys-427, and Cys-429–Cys-438. Asn-401 carries N-linked (GlcNAc...) asparagine glycosylation. An EGF-like domain is found at 427 to 438 (CQCYQGWKGLYC).

It belongs to the glycosyl hydrolase 56 family. In terms of assembly, monomer. Expressed by the venom gland.

Its subcellular location is the secreted. The enzyme catalyses Random hydrolysis of (1-&gt;4)-linkages between N-acetyl-beta-D-glucosamine and D-glucuronate residues in hyaluronate.. In terms of biological role, snake venom endo-hyaluronidase that degrades hyaluronan to smaller oligosaccharide fragments. In venom, it is not toxic by itself, but increases the diffusion of other venom proteins by degrading the extracellular matrix. In addition, it displays antiedematogenic activity. The protein is Hyaluronidase of Echis pyramidum leakeyi (Leakey's carpet viper).